The primary structure comprises 87 residues: Small ribosomal subunit protein uS15c (87 aa).

The protein belongs to the universal ribosomal protein uS15 family. Part of the 30S ribosomal subunit.

The protein resides in the plastid. The protein localises to the chloroplast. In Atropa belladonna (Belladonna), this protein is Small ribosomal subunit protein uS15c (rps15).